The following is a 588-amino-acid chain: MSTETELQVAVKTSAKKDSRKKGQDRSEATLIKRFKGEGVRYKAKLIGIDEVSAARGDKLCQDSMMKLKGVVAGARSKGEHKQKIFLTISFGGIKIFDEKTGALQHHHAVHEISYIAKDITDHRAFGYVCGKEGNHRFVAIKTAQAAEPVILDLRDLFQLIYELKQREELEKKAQKDKQCEQAVYQTILEEDVEDPVYQYIVFEAGHEPIRDPETEENIYQVPTSQKKEGVYDVPKSQPVSNGYSFEDFEERFAAATPNRNLPTDFDEIFEATKAVTQLELFGDMSTPPDITSPPTPATPGDAFIPSSSQTLPASADVFSSVPFGTAAVPSGYVAMGAVLPSFWGQQPLVQQQMVMGAQPPVAQVMPGAQPIAWGQPGLFPATQQPWPTVAGQFPPAAFMPTQTVMPLPAAMFQGPLTPLATVPGTSDSTRSSPQTDKPRQKMGKETFKDFQMAQPPPVPSRKPDQPSLTCTSEAFSSYFNKVGVAQDTDDCDDFDISQLNLTPVTSTTPSTNSPPTPAPRQSSPSKSSASHASDPTTDDIFEEGFESPSKSEEQEAPDGSQASSNSDPFGEPSGEPSGDNISPQAGS.

The tract at residues 1 to 26 (MSTETELQVAVKTSAKKDSRKKGQDR) is disordered. Over residues 15–26 (AKKDSRKKGQDR) the composition is skewed to basic and acidic residues. The 154-residue stretch at 36-189 (KGEGVRYKAK…CEQAVYQTIL (154 aa)) folds into the PID domain. 3 positions are modified to phosphotyrosine: Tyr198, Tyr220, and Tyr232. Disordered stretches follow at residues 417 to 443 (LTPL…RQKM), 451 to 470 (FQMA…PSLT), and 502 to 588 (LTPV…QAGS). Positions 424 to 436 (PGTSDSTRSSPQT) are enriched in polar residues. Composition is skewed to low complexity over residues 503–512 (TPVTSTTPST) and 520–534 (PRQS…SHAS). Position 524 is a phosphoserine; by CDK5 (Ser524). The span at 537–546 (TTDDIFEEGF) shows a compositional bias: acidic residues.

In terms of assembly, associates with the SH2 domains of SRC, FYN and ABL. Interacts (phosphorylated on tyrosine residues) with CRK and CRKL (via respective SH2 domain). Interacts with SIAH1, LRP8 and VLDLR. Interacts with LRP1. Interacts with APLP1 (via NPXY motif). Interacts with DAB2IP. Interacts with ZSWIM8. Phosphorylated by FYN on Tyr-198 and Tyr-220 upon reelin induction in embryonic neurons. Also phosphorylated on Ser-524 independently of reelin signaling. In terms of processing, ubiquitinated by various cullin-5-RING E3 ubiquitin-protein ligase complexes (ECS complexes) following ligand-binding and phosphorylation, leading to its degradation. Ubiquitinated by the ECS(SOCS7) complex in the cortical plate of the developing cerebral cortex following ligand-binding and phosphorylation by FYN, leading to its degradation by the proteasome. Recognized by ZSWIM8 through a disorder targets misorder mechanism that eliminates misfolded DAB1 via ubiquitination and proteasomal degradation. In terms of tissue distribution, mainly expressed in brain.

It localises to the cytoplasm. Its function is as follows. Signaling adapter of the reelin-mediated signaling pathway, which regulates the migration and differentiation of postmitotic neurons during brain development. Mediates intracellular transduction of Reelin signaling following reelin (RELN)-binding to its receptor: acts by docking proteins through its phosphotyrosine residues and PID domain. This chain is Disabled homolog 1 (DAB1), found in Homo sapiens (Human).